We begin with the raw amino-acid sequence, 1093 residues long: Isomaltosyltransferase (1093 aa).

An N-terminal signal peptide occupies residues 1–29 (MYVRNLTGSFRFSLSFLLCFCLFVPSIYA). Catalysis depends on Asp566, which acts as the Nucleophile. Glu569 is an active-site residue. Asp631 serves as the catalytic Proton donor. A CBM6 domain is found at 968 to 1091 (VEYEAEFGVQ…GINFDNIAIV (124 aa)).

This sequence belongs to the glycosyl hydrolase 31 family.

The protein localises to the secreted. It catalyses the reaction 2 alpha-isomaltosyl-(1-&gt;4)-D-maltotriose = alpha-isomaltosyl-(1-&gt;3)-alpha-isomaltosyl-(1-&gt;4)-D-maltotriose + D-maltotriose. The catalysed reaction is alpha-isomaltosyl-(1-&gt;3)-alpha-isomaltosyl-(1-&gt;4)-D-maltotriose = cyclobis-(1-&gt;3)-alpha-D-isomaltosyl + D-maltotriose. With respect to regulation, strongly inhibited by Hg(2+) and moderately inhibited by Cu(2+) and Pb(2+). Other metal ions, Tris and EDTA have almost no effects. Its function is as follows. Glycosyltransferase involved, together with CtsZ, in the conversion of alpha-1,4-glucan into a cyclic tetrasaccharide (CTS) constructed from four alpha-glucopyranosyl residues. Catalyzes the alpha-(1-&gt;3) transfer of the isomaltosyl moiety of alpha-isomaltosyl-(1-&gt;4)-D-maltotriose to another alpha-isomaltosyl-(1-&gt;4)-D-maltotriose, resulting in alpha-isomaltosyl-(1-&gt;3)-alpha-isomaltosyl-alpha-(1-&gt;4)-maltotriose formation. In addition, the enzyme catalyzes the intramolecular cyclization of the product, generating the cyclic tetrasaccharide cyclobis-(1-&gt;6)-alpha-nigerosyl. This Sporosarcina globispora (Bacillus globisporus) protein is Isomaltosyltransferase.